The sequence spans 410 residues: Testis-specific Y-encoded-like protein 6 (410 aa).

Disordered regions lie at residues 1–31 (MSLP…EKSK) and 46–69 (PIVF…DGGH). The residue at position 9 (S9) is a Phosphoserine. Residues 18-31 (EDPHQGQRSREKSK) show a composition bias toward basic and acidic residues.

The protein belongs to the nucleosome assembly protein (NAP) family.

The sequence is that of Testis-specific Y-encoded-like protein 6 (TSPYL6) from Homo sapiens (Human).